A 495-amino-acid polypeptide reads, in one-letter code: MAVNVRDYIAENYGLFINGEFVKGSSDETIEVTNPATGETLSHITRAKDKDVDHAVKVAQDAFESWSLTSKSERAQMLRDIGDKLMAQKDKIAMIETLNNGKPIRETTAIDIPFAARHFHYFASVIETEEGTVNDIDKDTMSIVRHEPIGVVGAVVAWNFPMLLAAWKIAPAIAAGNTIVIQPSSSTPLSLLEVAKIFQEVLPKGVVNILTGKGSESGNAIFNHDGVDKLSFTGSTDVGYQVAEAAAKHLVPATLELGGKSANIILDDANLDLAVEGIQLGILFNQGEVCSAGSRLLVHEKIYDQLVPRLQEAFSNIKVGDPQDEATQMGSQTGKDQLDKIQSYIDAAKESDAQILAGGHRLTENGLDKGFFFEPTLIAVPDNHHKLAQEEIFGPVLTVIKVKDDQEAIDIANDSEYGLAGGVFSQNITRALNIAKAVRTGRIWINTYNQVPEGAPFGGYKKSGIGRETYKGALSNYQQVKNIYIDTSNALKGLY.

212-218 (GKGSESG) lines the NAD(+) pocket. Catalysis depends on residues E256 and C290.

Belongs to the aldehyde dehydrogenase family.

It carries out the reaction an aldehyde + NAD(+) + H2O = a carboxylate + NADH + 2 H(+). The protein is Putative aldehyde dehydrogenase AldA (aldA) of Staphylococcus aureus (strain MSSA476).